A 348-amino-acid polypeptide reads, in one-letter code: MKKSLIALTLAALPVAATADVTLYGAIKAGVQTYRSVEHTDGKVSKVETGSEIADFGSKIGFKGQEDLGNGLKAVWQLEQGASVAGTNTGWGNKQSFVGLKGGFGTIRAGSLNSPLKNTDANVNAWESGKFTGNVLEISGMAKREHRYLSVRYDSPEFAGFSGSVQYAPKDNSGSNGESYHVGLNYQNSGFFAQYAGLFQRYGEGTKKIEYEHQVYSIPSLFVEKLQVHRLVGGYDNNALYVSVAAQQQDAKLYGARRANSHNSQTEVAATAAYRFGNVTPRVSYAHGFKGTVDSADHDNTYDQVVVGAEYDFSKRTSALVSAGWLQEGKGADKIVSTASAVVLRHKF.

The signal sequence occupies residues M1–A19.

Belongs to the Gram-negative porin family. As to quaternary structure, homotrimer.

The protein resides in the cell outer membrane. In terms of biological role, serves as a slightly cation selective porin. Major antigen on the gonococcal cell surface and it may have pathogenic properties in addition to its porin activity. This Neisseria gonorrhoeae protein is Major outer membrane protein P.IB (porB).